We begin with the raw amino-acid sequence, 331 residues long: Light-harvesting complex I LH35 proteins (331 aa).

It is found in the plastid. The protein localises to the chloroplast. The chain is Light-harvesting complex I LH35 proteins from Euglena gracilis.